We begin with the raw amino-acid sequence, 153 residues long: Arachidonate 5-lipoxygenase-activating protein (153 aa).

The Lumenal portion of the chain corresponds to 1–8; the sequence is MDQEAMGN. Residues 9-30 form a helical membrane-spanning segment; the sequence is IVLLAIVTLISVVQNAFFAHKV. Topologically, residues 31 to 52 are cytoplasmic; the sequence is EHESKTHNGRSFQRTGTPAFER. The chain crosses the membrane as a helical span at residues 53-77; it reads VYTANQNCVDAYPTFLVVLWSAGLF. The Lumenal portion of the chain corresponds to 78-80; it reads CSQ. A helical membrane pass occupies residues 81–102; that stretch reads VPAAFAGLMYLFVRQKYFVGYL. At 103 to 107 the chain is on the cytoplasmic side; sequence GERTQ. The stretch at 108–115 is an intramembrane region; sequence STPGYIFG. Residues 116–128 form a helical membrane-spanning segment; sequence KRIILFLFLMSLA. Over 129–153 the chain is Lumenal; it reads GIFNYFLILFFGSDFENYIKTITTT.

Belongs to the MAPEG family. Homotrimer. Interacts with LTC4S and ALOX5.

It localises to the nucleus membrane. The protein localises to the endoplasmic reticulum membrane. In terms of biological role, required for leukotriene biosynthesis by ALOX5 (5-lipoxygenase). Anchors ALOX5 to the membrane. Binds arachidonic acid, and could play an essential role in the transfer of arachidonic acid to ALOX5. Binds to MK-886, a compound that blocks the biosynthesis of leukotrienes. The chain is Arachidonate 5-lipoxygenase-activating protein (ALOX5AP) from Sus scrofa (Pig).